Consider the following 149-residue polypeptide: Transcriptional repressor NrdR (149 aa).

A zinc finger spans residues 3 to 34 (CPFCSATDTKVIDSRLVADGHQVRRRRECVQC). The ATP-cone domain occupies 49-139 (PRVVKQDGSR…VYRAFEDVSE (91 aa)).

The protein belongs to the NrdR family. The cofactor is Zn(2+).

In terms of biological role, negatively regulates transcription of bacterial ribonucleotide reductase nrd genes and operons by binding to NrdR-boxes. In Shewanella halifaxensis (strain HAW-EB4), this protein is Transcriptional repressor NrdR.